Consider the following 178-residue polypeptide: Probable chorismate pyruvate-lyase (178 aa).

Residues Arg73, Leu111, and Glu163 each contribute to the substrate site.

This sequence belongs to the UbiC family.

It localises to the cytoplasm. It catalyses the reaction chorismate = 4-hydroxybenzoate + pyruvate. Its pathway is cofactor biosynthesis; ubiquinone biosynthesis. Removes the pyruvyl group from chorismate, with concomitant aromatization of the ring, to provide 4-hydroxybenzoate (4HB) for the ubiquinone pathway. The protein is Probable chorismate pyruvate-lyase of Pseudomonas aeruginosa (strain ATCC 15692 / DSM 22644 / CIP 104116 / JCM 14847 / LMG 12228 / 1C / PRS 101 / PAO1).